A 457-amino-acid polypeptide reads, in one-letter code: Cysteine--tRNA ligase (457 aa).

Position 28 (Cys28) interacts with Zn(2+). The short motif at 30–40 (PTVYDTAHIGN) is the 'HIGH' region element. Zn(2+) is bound by residues Cys212, His237, and Glu241. The short motif at 270–274 (KMSKS) is the 'KMSKS' region element. Lys273 provides a ligand contact to ATP.

This sequence belongs to the class-I aminoacyl-tRNA synthetase family. In terms of assembly, monomer. The cofactor is Zn(2+).

It localises to the cytoplasm. It catalyses the reaction tRNA(Cys) + L-cysteine + ATP = L-cysteinyl-tRNA(Cys) + AMP + diphosphate. In Wolbachia pipientis wMel, this protein is Cysteine--tRNA ligase.